We begin with the raw amino-acid sequence, 394 residues long: Elongation factor Tu 2 (394 aa).

A tr-type G domain is found at 10 to 204; sequence KPHVNVGTIG…ALDSYIPQPE (195 aa). A G1 region spans residues 19-26; sequence GHVDHGKT. GTP is bound at residue 19 to 26; sequence GHVDHGKT. Thr26 provides a ligand contact to Mg(2+). The segment at 60–64 is G2; it reads GITIN. Positions 81-84 are G3; sequence DCPG. Residues 81-85 and 136-139 contribute to the GTP site; these read DCPGH and NKCD. The segment at 136 to 139 is G4; sequence NKCD. The G5 stretch occupies residues 174–176; that stretch reads SAL.

This sequence belongs to the TRAFAC class translation factor GTPase superfamily. Classic translation factor GTPase family. EF-Tu/EF-1A subfamily. As to quaternary structure, monomer.

Its subcellular location is the cytoplasm. It catalyses the reaction GTP + H2O = GDP + phosphate + H(+). In terms of biological role, GTP hydrolase that promotes the GTP-dependent binding of aminoacyl-tRNA to the A-site of ribosomes during protein biosynthesis. The protein is Elongation factor Tu 2 of Yersinia pestis bv. Antiqua (strain Antiqua).